A 267-amino-acid chain; its full sequence is Soluble interferon gamma receptor OPG193 (267 aa).

The N-terminal stretch at methionine 1–alanine 17 is a signal peptide. Asparagine 42 and asparagine 150 each carry an N-linked (GlcNAc...) asparagine; by host glycan.

This sequence belongs to the type II cytokine receptor family. In terms of assembly, homodimer. Interacts with host IFNG.

It is found in the secreted. Its function is as follows. Counteracts the antiviral effects of host IFN-gamma. Acts as a soluble IFN-gamma receptor and thus inhibits the interaction between host IFN-gamma and its receptor. In Cynomys gunnisoni (Gunnison's prairie dog), this protein is Soluble interferon gamma receptor OPG193 (OPG193).